The chain runs to 162 residues: CASP-like protein 0U1 (162 aa).

The Cytoplasmic portion of the chain corresponds to 1–11 (MAAVEAAKTPR). Residues 12-32 (FILLIIEWVFALVAFAVMGHY) traverse the membrane as a helical segment. Topologically, residues 33-43 (LFDDRRSSFEY) are extracellular. The helical transmembrane segment at 44-64 (LTAICILVWLVVMIYMVILCC) threads the bilayer. The Cytoplasmic segment spans residues 65–69 (GRALP). Residues 70–90 (PLIEAAIFLLFAILVFIAFLV) traverse the membrane as a helical segment. Residues 91 to 123 (TAVKCNNSETIVIAGQTISRKVCEGESEPKAAA) are Extracellular-facing. N-linked (GlcNAc...) asparagine glycosylation occurs at Asn-96. The chain crosses the membrane as a helical span at residues 124–144 (AFAFLLGLLLAGSSVLGCIAF). At 145–162 (RRPSAPPLSSFQNPTSSV) the chain is on the cytoplasmic side.

It belongs to the Casparian strip membrane proteins (CASP) family. In terms of assembly, homodimer and heterodimers.

Its subcellular location is the cell membrane. The polypeptide is CASP-like protein 0U1 (Chlorokybus atmophyticus (Soil alga)).